The following is a 1385-amino-acid chain: L-2-aminoadipate reductase large subunit (1385 aa).

In terms of domain architecture, Carrier spans Ser843–Arg920. The residue at position 880 (Ser880) is an O-(pantetheine 4'-phosphoryl)serine.

It belongs to the ATP-dependent AMP-binding enzyme family. Heterodimer of an alpha and a beta subunit. Requires pantetheine 4'-phosphate as cofactor.

It carries out the reaction (S)-2-amino-6-oxohexanoate + NADP(+) + H2O = L-2-aminoadipate + NADPH + 2 H(+). It catalyses the reaction (S)-2-amino-6-oxohexanoate + NAD(+) + H2O = L-2-aminoadipate + NADH + 2 H(+). The enzyme catalyses (S)-2-amino-6-oxohexanoate + AMP + diphosphate + NADP(+) = L-2-aminoadipate + ATP + NADPH + H(+). It functions in the pathway amino-acid biosynthesis; L-lysine biosynthesis via AAA pathway; L-lysine from L-alpha-aminoadipate (fungal route): step 1/3. Functionally, catalyzes the activation of alpha-aminoadipate by ATP-dependent adenylation and the reduction of activated alpha-aminoadipate by NADPH. The activated alpha-aminoadipate is bound to the phosphopantheinyl group of the enzyme itself before it is reduced to (S)-2-amino-6-oxohexanoate. This Eremothecium gossypii (strain ATCC 10895 / CBS 109.51 / FGSC 9923 / NRRL Y-1056) (Yeast) protein is L-2-aminoadipate reductase large subunit (LYS2).